Reading from the N-terminus, the 252-residue chain is Chitooligosaccharide deacetylase (252 aa).

His61 and His125 together coordinate Mg(2+).

It belongs to the YdjC deacetylase family. ChbG subfamily. As to quaternary structure, homodimer. Mg(2+) is required as a cofactor.

The protein localises to the cytoplasm. It carries out the reaction N,N'-diacetylchitobiose + H2O = N-acetyl-beta-D-glucosaminyl-(1-&gt;4)-D-glucosamine + acetate. It catalyses the reaction diacetylchitobiose-6'-phosphate + H2O = N'-monoacetylchitobiose-6'-phosphate + acetate. Its pathway is glycan degradation; chitin degradation. Involved in the degradation of chitin. ChbG is essential for growth on the acetylated chitooligosaccharides chitobiose and chitotriose but is dispensable for growth on cellobiose and chitosan dimer, the deacetylated form of chitobiose. Deacetylation of chitobiose-6-P and chitotriose-6-P is necessary for both the activation of the chb promoter by the regulatory protein ChbR and the hydrolysis of phosphorylated beta-glucosides by the phospho-beta-glucosidase ChbF. Catalyzes the removal of only one acetyl group from chitobiose-6-P to yield monoacetylchitobiose-6-P, the inducer of ChbR and the substrate of ChbF. This Escherichia coli (strain 55989 / EAEC) protein is Chitooligosaccharide deacetylase.